The primary structure comprises 391 residues: GTPase HflX (391 aa).

The tract at residues 162 to 181 (LAQQRGGAKGTRGASRGAGE) is disordered. The Hflx-type G domain occupies 222-391 (KIGAIVGYTN…KITDIIIFDK (170 aa)). GTP is bound by residues 228–235 (GYTNAGKS), 253–257 (FATLD), 278–281 (DTVG), 344–347 (NKMD), and 369–371 (SVT). Ser-235 and Thr-255 together coordinate Mg(2+).

Belongs to the TRAFAC class OBG-HflX-like GTPase superfamily. HflX GTPase family. As to quaternary structure, monomer. Associates with the 50S ribosomal subunit. It depends on Mg(2+) as a cofactor.

Its subcellular location is the cytoplasm. Functionally, GTPase that associates with the 50S ribosomal subunit and may have a role during protein synthesis or ribosome biogenesis. In Treponema denticola (strain ATCC 35405 / DSM 14222 / CIP 103919 / JCM 8153 / KCTC 15104), this protein is GTPase HflX.